The primary structure comprises 110 residues: Ig kappa chain V region 3547 (110 aa).

The segment at 1-23 (AYDMTQTPSSVSAAVGGTVTINC) is framework-1. The tract at residues 24–34 (QASEDISANLA) is complementarity-determining-1. The interval 35-49 (WYQQKPGQPPKLLIY) is framework-2. A complementarity-determining-2 region spans residues 50 to 56 (AASDLAS). The framework-3 stretch occupies residues 57 to 88 (GVPSRFKGSGSGTEYTLTISGVQCADAATYYC). The segment at 89–99 (QSADYSGSAVT) is complementarity-determining-3. The interval 100 to 109 (FGGGTEVVVK) is framework-4.

The protein is Ig kappa chain V region 3547 of Oryctolagus cuniculus (Rabbit).